Here is a 142-residue protein sequence, read N- to C-terminus: Spliceosomal protein DIB1 (142 aa).

The protein belongs to the DIM1 family. Component of the 25S [U4/U6.U5] tri-snRNP.

Its subcellular location is the nucleus. Functionally, essential role in pre-mRNA splicing. Also essential for entry into mitosis (G2/M progression) as well as for chromosome segregation during mitosis. The chain is Spliceosomal protein DIB1 (DIB1) from Candida glabrata (strain ATCC 2001 / BCRC 20586 / JCM 3761 / NBRC 0622 / NRRL Y-65 / CBS 138) (Yeast).